Here is a 57-residue protein sequence, read N- to C-terminus: MARRRKYEGLNPFVAAGLIKFSEEGELERIKLNPRTAILVSITVIIAILVLNILHPL.

At 1 to 33 the chain is on the cytoplasmic side; it reads MARRRKYEGLNPFVAAGLIKFSEEGELERIKLN. A helical membrane pass occupies residues 34 to 55; that stretch reads PRTAILVSITVIIAILVLNILH. At 56–57 the chain is on the extracellular side; it reads PL.

This sequence belongs to the SEC61-beta family. As to quaternary structure, component of the protein translocase complex. Heterotrimer consisting of alpha (SecY), beta (SecG) and gamma (SecE) subunits. Can form oligomers of the heterotrimer.

It localises to the cell membrane. Functionally, involved in protein export. The function of the beta subunit is unknown, but it may be involved in stabilization of the trimeric complex. The polypeptide is Preprotein translocase subunit SecG (Pyrobaculum islandicum (strain DSM 4184 / JCM 9189 / GEO3)).